A 256-amino-acid chain; its full sequence is Thiazole synthase (256 aa).

K96 (schiff-base intermediate with DXP) is an active-site residue. 1-deoxy-D-xylulose 5-phosphate contacts are provided by residues G157, 183 to 184 (AG), and 205 to 206 (NT).

This sequence belongs to the ThiG family. As to quaternary structure, homotetramer. Forms heterodimers with either ThiH or ThiS.

The protein localises to the cytoplasm. It catalyses the reaction [ThiS sulfur-carrier protein]-C-terminal-Gly-aminoethanethioate + 2-iminoacetate + 1-deoxy-D-xylulose 5-phosphate = [ThiS sulfur-carrier protein]-C-terminal Gly-Gly + 2-[(2R,5Z)-2-carboxy-4-methylthiazol-5(2H)-ylidene]ethyl phosphate + 2 H2O + H(+). The protein operates within cofactor biosynthesis; thiamine diphosphate biosynthesis. In terms of biological role, catalyzes the rearrangement of 1-deoxy-D-xylulose 5-phosphate (DXP) to produce the thiazole phosphate moiety of thiamine. Sulfur is provided by the thiocarboxylate moiety of the carrier protein ThiS. In vitro, sulfur can be provided by H(2)S. In Bacillus cereus (strain AH187), this protein is Thiazole synthase.